Consider the following 921-residue polypeptide: Extended synaptotagmin-2 (921 aa).

The Cytoplasmic segment spans residues methionine 1–glycine 103. The tract at residues methionine 1–glycine 103 is disordered. Residues glycine 58–arginine 75 show a composition bias toward basic residues. A helical membrane pass occupies residues valine 104–leucine 124. The Lumenal portion of the chain corresponds to proline 125 to tyrosine 127. The helical transmembrane segment at alanine 128–tryptophan 148 threads the bilayer. At cysteine 149–threonine 921 the chain is on the cytoplasmic side. Residues aspartate 191–valine 370 form the SMP-LTD domain. C2 domains follow at residues leucine 369–phenylalanine 489 and asparagine 514–asparagine 639. Lysine 400, aspartate 401, aspartate 413, aspartate 460, glutamate 461, aspartate 462, aspartate 464, aspartate 466, and aspartate 467 together coordinate Ca(2+). A disordered region spans residues arginine 660–proline 754. Serine 691 and serine 693 each carry phosphoserine. Threonine 705 carries the post-translational modification Phosphothreonine. Residues serine 736, serine 738, serine 739, serine 743, serine 748, serine 755, serine 758, and serine 761 each carry the phosphoserine modification. In terms of domain architecture, C2 3 spans proline 786–tyrosine 908. Positions lysine 833–lysine 840 are required for phosphatidylinositol 4,5-bisphosphate-dependent location at the cell membrane.

Belongs to the extended synaptotagmin family. Homodimer. Interacts with ESYT1 and ESYT3. Interacts with FGFR1 that has been activated by FGF1 binding. Interacts with the AP-2 complex; identified in a complex with the AP-2 complex and FGFR1. In terms of tissue distribution, widely expressed with high level in cerebellum.

Its subcellular location is the cell membrane. It localises to the endoplasmic reticulum membrane. Functionally, tethers the endoplasmic reticulum to the cell membrane and promotes the formation of appositions between the endoplasmic reticulum and the cell membrane. Binds glycerophospholipids in a barrel-like domain and may play a role in cellular lipid transport. Plays a role in FGF signaling via its role in the rapid internalization of FGFR1 that has been activated by FGF1 binding; this occurs most likely via the AP-2 complex. Promotes the localization of SACM1L at endoplasmic reticulum-plasma membrane contact sites (EPCS). This chain is Extended synaptotagmin-2, found in Homo sapiens (Human).